A 493-amino-acid polypeptide reads, in one-letter code: Angiopoietin-related protein 2 (493 aa).

A signal peptide spans 1 to 19 (MRPLCMTYWWLGLLATVGA). Coiled-coil stretches lie at residues 77–115 (EVHL…VDGG) and 152–202 (ALEL…QLEE). Residues asparagine 164 and asparagine 192 are each glycosylated (N-linked (GlcNAc...) asparagine). The 221-residue stretch at 269-489 (DKPSGPWRDC…KVVMMIRPNP (221 aa)) folds into the Fibrinogen C-terminal domain. Intrachain disulfides connect cysteine 278–cysteine 307 and cysteine 430–cysteine 443.

As to expression, widely expressed in heart, tongue, lung and skeletal muscle. Also found in lower levels in kidney, epididymis and testis.

It is found in the secreted. In terms of biological role, induces sprouting in endothelial cells through an autocrine and paracrine action. The sequence is that of Angiopoietin-related protein 2 (Angptl2) from Mus musculus (Mouse).